A 357-amino-acid polypeptide reads, in one-letter code: Probable cinnamyl alcohol dehydrogenase (357 aa).

A Zn(2+)-binding site is contributed by C47. T49 contributes to the NADP(+) binding site. 7 residues coordinate Zn(2+): H69, E70, C100, C103, C106, C114, and C163. NADP(+) contacts are provided by residues T167, 188 to 193 (GLGGVG), 211 to 216 (SSSDKK), T251, G275, and 298 to 300 (SFI).

It belongs to the zinc-containing alcohol dehydrogenase family. Homodimer. It depends on Zn(2+) as a cofactor.

It carries out the reaction (E)-cinnamyl alcohol + NADP(+) = (E)-cinnamaldehyde + NADPH + H(+). The enzyme catalyses (E)-coniferol + NADP(+) = (E)-coniferaldehyde + NADPH + H(+). It catalyses the reaction (E)-sinapyl alcohol + NADP(+) = (E)-sinapaldehyde + NADPH + H(+). The catalysed reaction is (E)-4-coumaroyl alcohol + NADP(+) = (E)-4-coumaraldehyde + NADPH + H(+). It carries out the reaction (E)-caffeyl alcohol + NADP(+) = (E)-caffeyl aldehyde + NADPH + H(+). Its pathway is aromatic compound metabolism; phenylpropanoid biosynthesis. Its function is as follows. Involved in lignin biosynthesis. Catalyzes the final step specific for the production of lignin monomers. Catalyzes the NADPH-dependent reduction of coniferaldehyde, 5-hydroxyconiferaldehyde, sinapaldehyde, 4-coumaraldehyde and caffeyl aldehyde to their respective alcohols. The protein is Probable cinnamyl alcohol dehydrogenase of Populus deltoides (Eastern poplar).